Reading from the N-terminus, the 835-residue chain is Probable RNA-directed RNA polymerase (835 aa).

It belongs to the totiviridae RNA-directed RNA polymerase family.

It carries out the reaction RNA(n) + a ribonucleoside 5'-triphosphate = RNA(n+1) + diphosphate. Functionally, RNA-dependent RNA polymerase which replicates the viral genome. Catalyzes the transcription of fully conservative plus-strand genomic RNAs that are extruded from the virion into the cytoplasm where they function as mRNAs for translation of viral proteins and also as substrates for encapsidation to form new virions. Once encapsidated, the positive strand is converted to dsRNA by the RNA-directed RNA polymerase. This Helminthosporium victoriae virus-190S (Hv190SV) protein is Probable RNA-directed RNA polymerase.